The following is a 764-amino-acid chain: FAST kinase domain-containing protein 5, mitochondrial (764 aa).

Residues 1–27 (MAATLKSLKLLRYQAFCSPSAFGAVRS) constitute a mitochondrion transit peptide. The segment at 68 to 94 (IPTTSSARPGLEFSKTSSSKASTLQLG) is disordered. Polar residues predominate over residues 81 to 93 (SKTSSSKASTLQL). Ser95 bears the Phosphoserine mark. N6-acetyllysine is present on Lys507. The region spanning 697–757 (LAIQFTNRNQ…RLEKLAFLHE (61 aa)) is the RAP domain.

This sequence belongs to the FAST kinase family. In terms of assembly, found in a complex with GRSF1, DDX28, DHX30 and FASTKD2. Associates with the 12S mitochondrial rRNA (12S mt-rRNA).

It localises to the mitochondrion matrix. The protein resides in the mitochondrion nucleoid. Its function is as follows. Plays an important role in the processing of non-canonical mitochondrial mRNA precursors. The chain is FAST kinase domain-containing protein 5, mitochondrial (FASTKD5) from Pongo abelii (Sumatran orangutan).